A 319-amino-acid chain; its full sequence is MSLNFLDFEQPIAELEAKIDSLTAVSRQDEKLDINIDEEVHRLREKSVELTRKIFADLGAWQVAQLARHPQRPYTLDYVRLAFDEFDELAGDRAYADDKAIVGGIARLEGRPVMIIGHQKGRETKEKIRRNFGMPAPEGYRKALRLMEMAERFNMPIITFIDTPGAYPGVGAEERGQSEAIARNLREMSRLNVPVICTVIGEGGSGGALAIGVGDKVNMLQYSTYSVISPEGCASILWKSADKAPLAAEAMGIIAPRLKELKLIDSIIPEPLGGAHRNPEAMAASLKAQLLEDLADLDVLSTDDLKNRRYQRLMSYGYA.

One can recognise a CoA carboxyltransferase C-terminal domain in the interval 35–296; that stretch reads NIDEEVHRLR…KAQLLEDLAD (262 aa).

The protein belongs to the AccA family. Acetyl-CoA carboxylase is a heterohexamer composed of biotin carboxyl carrier protein (AccB), biotin carboxylase (AccC) and two subunits each of ACCase subunit alpha (AccA) and ACCase subunit beta (AccD).

The protein localises to the cytoplasm. The enzyme catalyses N(6)-carboxybiotinyl-L-lysyl-[protein] + acetyl-CoA = N(6)-biotinyl-L-lysyl-[protein] + malonyl-CoA. It participates in lipid metabolism; malonyl-CoA biosynthesis; malonyl-CoA from acetyl-CoA: step 1/1. Its function is as follows. Component of the acetyl coenzyme A carboxylase (ACC) complex. First, biotin carboxylase catalyzes the carboxylation of biotin on its carrier protein (BCCP) and then the CO(2) group is transferred by the carboxyltransferase to acetyl-CoA to form malonyl-CoA. The chain is Acetyl-coenzyme A carboxylase carboxyl transferase subunit alpha from Salmonella agona (strain SL483).